Here is an 861-residue protein sequence, read N- to C-terminus: Bifunctional uridylyltransferase/uridylyl-removing enzyme (861 aa).

The segment at 1-322 (MHTAAAATPA…FPTELGITRT (322 aa)) is uridylyltransferase. Positions 323 to 679 (INGRFVERQG…ARISPVGEGL (357 aa)) are uridylyl-removing. An HD domain is found at 441 to 557 (VDQHILMVVR…RHFADQVGSE (117 aa)). ACT domains lie at 680 to 763 (QVAV…AEPP) and 792 to 861 (LLSL…ALAI).

The protein belongs to the GlnD family. It depends on Mg(2+) as a cofactor.

The catalysed reaction is [protein-PII]-L-tyrosine + UTP = [protein-PII]-uridylyl-L-tyrosine + diphosphate. The enzyme catalyses [protein-PII]-uridylyl-L-tyrosine + H2O = [protein-PII]-L-tyrosine + UMP + H(+). With respect to regulation, uridylyltransferase (UTase) activity is inhibited by glutamine, while glutamine activates uridylyl-removing (UR) activity. Functionally, modifies, by uridylylation and deuridylylation, the PII regulatory proteins (GlnB and homologs), in response to the nitrogen status of the cell that GlnD senses through the glutamine level. Under low glutamine levels, catalyzes the conversion of the PII proteins and UTP to PII-UMP and PPi, while under higher glutamine levels, GlnD hydrolyzes PII-UMP to PII and UMP (deuridylylation). Thus, controls uridylylation state and activity of the PII proteins, and plays an important role in the regulation of nitrogen assimilation and metabolism. The protein is Bifunctional uridylyltransferase/uridylyl-removing enzyme of Ralstonia nicotianae (strain ATCC BAA-1114 / GMI1000) (Ralstonia solanacearum).